The following is a 427-amino-acid chain: Enolase (427 aa).

Gln163 serves as a coordination point for (2R)-2-phosphoglycerate. Catalysis depends on Glu205, which acts as the Proton donor. Mg(2+) contacts are provided by Asp242, Glu285, and Asp312. Residues Lys337, Arg366, Ser367, and Lys388 each contribute to the (2R)-2-phosphoglycerate site. The active-site Proton acceptor is the Lys337.

Belongs to the enolase family. Mg(2+) is required as a cofactor.

The protein localises to the cytoplasm. Its subcellular location is the secreted. It is found in the cell surface. It carries out the reaction (2R)-2-phosphoglycerate = phosphoenolpyruvate + H2O. It participates in carbohydrate degradation; glycolysis; pyruvate from D-glyceraldehyde 3-phosphate: step 4/5. In terms of biological role, catalyzes the reversible conversion of 2-phosphoglycerate (2-PG) into phosphoenolpyruvate (PEP). It is essential for the degradation of carbohydrates via glycolysis. This chain is Enolase, found in Variovorax paradoxus (strain S110).